The sequence spans 376 residues: Mannosyl phosphorylinositol ceramide synthase CSH1 (376 aa).

Helical transmembrane passes span 7-27 (ILIIANIALLISIIHYTFDLL) and 274-294 (ILSCVVTGFIFGFFILYGEFT). The segment at 331-351 (NKEKRRNPTRHEYNSRGKRLR) is disordered. Ser-354 is subject to Phosphoserine.

It belongs to the glycosyltransferase 32 family. In terms of assembly, heterodimer of CSH1 and CSG2.

It is found in the vacuole membrane. The catalysed reaction is a 1D-myo-inositol-1-phospho-N-[(R)-2-hydroxy-very-long-chain fatty acyl]-(R)-4-hydroxysphingoid base + GDP-alpha-D-mannose = an alpha-D-mannosyl-(1&lt;-&gt;6)-1D-myo-inositol-1-phospho-N-[(R)-2-hydroxy-very-long-chain fatty acyl]-(R)-4-hydroxysphingoid base + GDP + H(+). Functionally, involved in the synthesis of mannosyl phosphorylinositol ceramide. Catalyzes the addition of mannosyl to phosphorylinositol ceramide. The protein is Mannosyl phosphorylinositol ceramide synthase CSH1 of Saccharomyces cerevisiae (strain ATCC 204508 / S288c) (Baker's yeast).